The primary structure comprises 624 residues: RQC trigger complex subunit CUE3 (624 aa).

Residues 316 to 359 (VNEEQLSALMELFPQFSKYQLSQTLLAYDNNIELVTNKIFEDPT) form the CUE domain. Disordered stretches follow at residues 366 to 390 (REPA…ELSI), 435 to 469 (RDDT…DDSN), and 546 to 624 (SKTG…NNAI). Ser-377 is subject to Phosphoserine. Composition is skewed to basic and acidic residues over residues 443–455 (DVNR…RIGL) and 568–589 (EQAK…TEQK). The span at 590-617 (KRQHAKNEKRKGARANHNRKKGHDKKLA) shows a compositional bias: basic residues.

Component of the RQT (ribosome quality control trigger) complex, composed of SLH1, CUE3, and RQT4. Interacts with ubiquitin; the interaction is direct. Interacts with SLH1. Interacts with RQT4. Interacts with HEL2. Associates with translating ribosomes.

The protein resides in the cytoplasm. Functionally, involved in activation of the ribosome quality control (RQC) pathway, a pathway that degrades nascent peptide chains during problematic translation. Specifically recognizes and binds RPS20/uS10 ubiquitinated by HEL2, promoting recruitment of the RQT (ribosome quality control trigger) complex on stalled ribosomes, followed by disassembly of stalled ribosomes. This chain is RQC trigger complex subunit CUE3 (CUE3), found in Saccharomyces cerevisiae (strain ATCC 204508 / S288c) (Baker's yeast).